The following is a 189-amino-acid chain: Large ribosomal subunit protein uL5 (189 aa).

Belongs to the universal ribosomal protein uL5 family. Part of the 50S ribosomal subunit; part of the 5S rRNA/L5/L18/L25 subcomplex. Contacts the 5S rRNA and the P site tRNA. Forms a bridge to the 30S subunit in the 70S ribosome.

Functionally, this is one of the proteins that bind and probably mediate the attachment of the 5S RNA into the large ribosomal subunit, where it forms part of the central protuberance. In the 70S ribosome it contacts protein S13 of the 30S subunit (bridge B1b), connecting the 2 subunits; this bridge is implicated in subunit movement. Contacts the P site tRNA; the 5S rRNA and some of its associated proteins might help stabilize positioning of ribosome-bound tRNAs. In Corynebacterium jeikeium (strain K411), this protein is Large ribosomal subunit protein uL5.